The primary structure comprises 233 residues: ATP synthase subunit a 2 (233 aa).

5 helical membrane-spanning segments follow: residues 15-35, 78-98, 107-127, 169-189, and 194-214; these read FVVI…LVIG, YLAF…LTVV, SLST…IYGI, IMSG…FVPV, and LGLV…LVYI.

This sequence belongs to the ATPase A chain family. In terms of assembly, F-type ATPases have 2 components, CF(1) - the catalytic core - and CF(0) - the membrane proton channel. CF(1) has five subunits: alpha(3), beta(3), gamma(1), delta(1), epsilon(1). CF(0) has four main subunits: a, b, b' and c.

It is found in the cellular thylakoid membrane. Key component of the proton channel; it plays a direct role in the translocation of protons across the membrane. The protein is ATP synthase subunit a 2 of Picosynechococcus sp. (strain ATCC 27264 / PCC 7002 / PR-6) (Agmenellum quadruplicatum).